Consider the following 344-residue polypeptide: Protein L-Myc-1-A (344 aa).

Disordered stretches follow at residues 100 to 162 and 209 to 261; these read RLTT…DDEI and PPEP…EDIV. Composition is skewed to polar residues over residues 102–112, 123–133, and 236–255; these read TTASPRATNPQ, PGVNSIEQNAN, and PALQ…SGSS. The 53-residue stretch at 261 to 313 folds into the bHLH domain; it reads VKKKNHNYLERKRRNDLRSRFLALREEVPSLTRSTKTPKVVVLSKATEFLKGL. The interval 313 to 341 is leucine-zipper; it reads LVIQEQQLTAEKFKLWSRHQQLLRRISHL.

In terms of assembly, efficient DNA binding requires dimerization with another bHLH protein. Binds DNA as a heterodimer with MAX. High levels in oocytes, modest levels in kidney and low levels in spleen.

Its subcellular location is the nucleus. This Xenopus laevis (African clawed frog) protein is Protein L-Myc-1-A (mycl1-a).